The sequence spans 208 residues: Probable splicing factor, arginine/serine-rich 5 (208 aa).

The RRM domain occupies 2–74 (PRLYLGKIPY…MRLVVEMARG (73 aa)). A disordered region spans residues 71–208 (MARGKPRGND…RSPSPGSPKD (138 aa)). Basic residues predominate over residues 84 to 123 (SRSPRRRSRSPRRRSRTPPRRRSRSRDRKRSRRSRSRSSS). Basic and acidic residues predominate over residues 128–153 (PVRESRRRSESRSPSPKRDLKREASR).

The protein belongs to the splicing factor SR family. Extensively phosphorylated on serine residues in the RS domain.

The protein resides in the nucleus. In terms of biological role, plays a functionally redundant role in shifting germ cell sexual differentiation in hermaphrodites. The chain is Probable splicing factor, arginine/serine-rich 5 (rsp-5) from Caenorhabditis elegans.